We begin with the raw amino-acid sequence, 122 residues long: Large ribosomal subunit protein uL14 (122 aa).

Belongs to the universal ribosomal protein uL14 family. Part of the 50S ribosomal subunit. Forms a cluster with proteins L3 and L19. In the 70S ribosome, L14 and L19 interact and together make contacts with the 16S rRNA in bridges B5 and B8.

Functionally, binds to 23S rRNA. Forms part of two intersubunit bridges in the 70S ribosome. The sequence is that of Large ribosomal subunit protein uL14 from Shewanella amazonensis (strain ATCC BAA-1098 / SB2B).